A 427-amino-acid polypeptide reads, in one-letter code: UPF0597 protein FN1147 (427 aa).

It belongs to the UPF0597 family.

The polypeptide is UPF0597 protein FN1147 (Fusobacterium nucleatum subsp. nucleatum (strain ATCC 25586 / DSM 15643 / BCRC 10681 / CIP 101130 / JCM 8532 / KCTC 2640 / LMG 13131 / VPI 4355)).